Consider the following 396-residue polypeptide: Phosphoglycerate kinase (396 aa).

Substrate is bound by residues 21–23 (DLN), Arg36, 59–62 (HLGR), Arg113, and Arg146. ATP contacts are provided by residues Lys197, Glu319, and 345–348 (GGDT).

The protein belongs to the phosphoglycerate kinase family. As to quaternary structure, monomer.

Its subcellular location is the cytoplasm. It carries out the reaction (2R)-3-phosphoglycerate + ATP = (2R)-3-phospho-glyceroyl phosphate + ADP. It participates in carbohydrate degradation; glycolysis; pyruvate from D-glyceraldehyde 3-phosphate: step 2/5. In Legionella pneumophila (strain Paris), this protein is Phosphoglycerate kinase.